Consider the following 201-residue polypeptide: Large ribosomal subunit protein uL4 (201 aa).

A disordered region spans residues 45 to 66; sequence AQLTRSEVSGGGKKPWRQKGTG.

The protein belongs to the universal ribosomal protein uL4 family. Part of the 50S ribosomal subunit.

Its function is as follows. One of the primary rRNA binding proteins, this protein initially binds near the 5'-end of the 23S rRNA. It is important during the early stages of 50S assembly. It makes multiple contacts with different domains of the 23S rRNA in the assembled 50S subunit and ribosome. Functionally, forms part of the polypeptide exit tunnel. This is Large ribosomal subunit protein uL4 from Aeromonas salmonicida (strain A449).